The primary structure comprises 458 residues: ATP synthase subunit beta (458 aa).

ATP is bound at residue 148–155 (GGAGVGKT).

This sequence belongs to the ATPase alpha/beta chains family. In terms of assembly, F-type ATPases have 2 components, CF(1) - the catalytic core - and CF(0) - the membrane proton channel. CF(1) has five subunits: alpha(3), beta(3), gamma(1), delta(1), epsilon(1). CF(0) has three main subunits: a(1), b(2) and c(9-12). The alpha and beta chains form an alternating ring which encloses part of the gamma chain. CF(1) is attached to CF(0) by a central stalk formed by the gamma and epsilon chains, while a peripheral stalk is formed by the delta and b chains.

The protein resides in the cell inner membrane. It catalyses the reaction ATP + H2O + 4 H(+)(in) = ADP + phosphate + 5 H(+)(out). Functionally, produces ATP from ADP in the presence of a proton gradient across the membrane. The catalytic sites are hosted primarily by the beta subunits. The protein is ATP synthase subunit beta of Halorhodospira halophila (strain DSM 244 / SL1) (Ectothiorhodospira halophila (strain DSM 244 / SL1)).